Here is a 540-residue protein sequence, read N- to C-terminus: FAD-binding monooxygenase lolF1 (540 aa).

FAD-binding positions include 43–46 (VWRE) and 55–58 (DSLF). NADP(+) contacts are provided by residues 53 to 55 (AVD), 182 to 188 (TGPSGVQ), and 205 to 206 (QS).

This sequence belongs to the FAD-binding monooxygenase family. The cofactor is FAD.

Its pathway is alkaloid biosynthesis. FAD-binding monooxygenase; part of the gene cluster that mediates the biosynthesis of loline alkaloids, potent insecticidal agents composed of a pyrrolizidine ring system and an uncommon ether bridge linking carbons 2 and 7. Lolines are structurally differentiated by the various modifications of the L-amino group and include norloline, loline, N-methylloline, N-acetylloline, N-acetylnorloline, and N-formylloline. The first committed step is the condensation of O-acetyl-L-homoserine (derived from L-aspartic acid) and L-proline, probably catalyzed by the gamma-type pyridoxal 5'-phosphate(PLP)-dependent enzyme lolC, to give the diamino diacid, NACPP. Ensuing cyclization, decarboxylation, and acetylation steps yield 1-exo-acetamidopyrrolizidine (AcAP). LolO is required for installation of the ether bridge upon the pathway intermediate, 1-exo-acetamidopyrrolizidine (AcAP). In sequential 2-oxoglutarate- and O(2)-consuming steps, lolO removes hydrogens from C2 and C7 of AcAP to form both carbon-oxygen bonds in N-acetylnorloline (NANL), the precursor to all other lolines. The enzymes lolD, lolE, lolF and lolT have also been proposed to be involved in the ether-bridge installation. Further processing of the exocyclic moiety of NANL by fungal N-acetamidase (LolN), methyltransferase (LolM), and cytochrome P450 (LolP) enzymes, with occasional involvement of a plant acetyltransferase, generates the other known lolines. LolN transforms NANL to norlonine which is monomethylated and dimethylated to respectively lonine and N-methyllonine (NML) by lolM. LolP catalyzes hydroxylation of the methyl group in N-methylloline (NML) and further oxygenation to N-formylloline (NFL). A plant acetyltransferase is responsible for the acetylation of loline to form N-acetylloline (NAL). LolA might interact with aspartate kinase to prevent feedback inhibition of its activity by these end products and thereby promote production of L-homoserine from L-aspartate. The protein is FAD-binding monooxygenase lolF1 of Epichloe uncinata (Endophyte fungus).